Consider the following 370-residue polypeptide: Serine O-succinyltransferase (370 aa).

The AB hydrolase-1 domain occupies 46–355 (AILIVTGLSP…PQGHDAFLVD (310 aa)). The important for substrate specificity stretch occupies residues 52-55 (GLSP). The active-site Nucleophile is S149. Position 218 (R218) interacts with substrate. Residues D316 and H349 contribute to the active site. D350 is a substrate binding site.

The protein belongs to the AB hydrolase superfamily. MetX family. As to quaternary structure, homodimer.

Its subcellular location is the cytoplasm. The catalysed reaction is succinyl-CoA + L-serine = O-succinyl-L-serine + CoA. The enzyme catalyses L-homoserine + succinyl-CoA = O-succinyl-L-homoserine + CoA. It participates in amino-acid biosynthesis; L-cysteine biosynthesis; L-cysteine from L-serine: step 1/2. Transfers a succinyl group from succinyl-CoA to L-serine, forming succinyl-L-serine. In vitro, also has homoserine succinyl transferase activity. In Stenotrophomonas maltophilia (Pseudomonas maltophilia), this protein is Serine O-succinyltransferase.